A 129-amino-acid chain; its full sequence is Fluoride-specific ion channel FluC 2 (129 aa).

Transmembrane regions (helical) follow at residues 3–23 (FLYV…MNLW), 32–52 (ATLA…QFLA), 59–79 (LVIL…FSAF), and 90–110 (GAWL…LIMV). 2 residues coordinate Na(+): Gly71 and Thr74.

It belongs to the fluoride channel Fluc/FEX (TC 1.A.43) family.

Its subcellular location is the cell membrane. The catalysed reaction is fluoride(in) = fluoride(out). With respect to regulation, na(+) is not transported, but it plays an essential structural role and its presence is essential for fluoride channel function. Functionally, fluoride-specific ion channel. Important for reducing fluoride concentration in the cell, thus reducing its toxicity. This is Fluoride-specific ion channel FluC 2 from Listeria monocytogenes serotype 4b (strain F2365).